A 501-amino-acid chain; its full sequence is Alpha-internexin (501 aa).

Positions 1-87 (MSFGSEHYLC…SQAAARTNEY (87 aa)) are head. Ser-72 carries the phosphoserine modification. Residues 88 to 129 (KIIRTNEKEQLQGLNDRFAVFIEKVHQLETQNRALEAELAAL) form a coil 1A region. The 314-residue stretch at 94-407 (EKEQLQGLND…KLLEGEETRF (314 aa)) folds into the IF rod domain. A linker 1 region spans residues 130 to 142 (RQRHAEPSRVGEL). A coil 1B region spans residues 143–238 (FQRELRELRA…QVHDEEVAEL (96 aa)). Phosphoserine is present on Ser-219. Residues 239–262 (LATLQASSQAAAEVDVAVAKPDLT) form a linker 2 region. The segment at 263-408 (SALREIRAQY…LLEGEETRFS (146 aa)) is coil 2. Lys-290 is modified (N6-acetyllysine). Phosphoserine is present on residues Ser-335 and Ser-498. The tract at residues 409 to 501 (TGGLSISGLN…EESTSSSQKM (93 aa)) is tail. A disordered region spans residues 441–501 (SAGLSLKKEE…EESTSSSQKM (61 aa)). Residues 488-501 (KSATEESTSSSQKM) are compositionally biased toward polar residues.

This sequence belongs to the intermediate filament family. Forms homodimers (in vitro). Forms heterodimers with NEFL, NEFM or NEFH (in vitro). In terms of processing, O-glycosylated.

In terms of biological role, class-IV neuronal intermediate filament that is able to self-assemble. It is involved in the morphogenesis of neurons. It may form an independent structural network without the involvement of other neurofilaments or it may cooperate with NEFL to form the filamentous backbone to which NEFM and NEFH attach to form the cross-bridges. May also cooperate with the neuronal intermediate filament protein PRPH to form filamentous networks. The polypeptide is Alpha-internexin (Ina) (Mus musculus (Mouse)).